The primary structure comprises 505 residues: Maturase K (505 aa).

Belongs to the intron maturase 2 family. MatK subfamily.

The protein resides in the plastid. Its subcellular location is the chloroplast. In terms of biological role, usually encoded in the trnK tRNA gene intron. Probably assists in splicing its own and other chloroplast group II introns. In Ulmus parvifolia (Chinese elm), this protein is Maturase K.